The primary structure comprises 388 residues: Xylose isomerase (388 aa).

Catalysis depends on residues histidine 54 and aspartate 57. Positions 181, 217, 220, 245, 255, 257, and 287 each coordinate Mg(2+).

It belongs to the xylose isomerase family. Homotetramer. Requires Mg(2+) as cofactor.

The protein resides in the cytoplasm. It carries out the reaction alpha-D-xylose = alpha-D-xylulofuranose. In terms of biological role, involved in D-xylose catabolism. This is Xylose isomerase (xylA) from Streptomyces rubiginosus.